The primary structure comprises 129 residues: Protein Turandot C (129 aa).

The N-terminal stretch at 1–21 (MNASISLLCFALLLISPFCLG) is a signal peptide.

This sequence belongs to the Turandot family.

It localises to the secreted. A humoral factor that may play a role in stress tolerance. The sequence is that of Protein Turandot C from Drosophila sechellia (Fruit fly).